The following is a 284-amino-acid chain: Pantothenate synthetase (284 aa).

30–37 provides a ligand contact to ATP; the sequence is MGNLHDGH. Residue His-37 is the Proton donor of the active site. Gln-61 contacts (R)-pantoate. Gln-61 contacts beta-alanine. Position 149-152 (149-152) interacts with ATP; the sequence is GEKD. Gln-155 lines the (R)-pantoate pocket. Residues Val-178 and 186–189 each bind ATP; that span reads LSSR.

The protein belongs to the pantothenate synthetase family. In terms of assembly, homodimer.

The protein localises to the cytoplasm. The enzyme catalyses (R)-pantoate + beta-alanine + ATP = (R)-pantothenate + AMP + diphosphate + H(+). The protein operates within cofactor biosynthesis; (R)-pantothenate biosynthesis; (R)-pantothenate from (R)-pantoate and beta-alanine: step 1/1. Functionally, catalyzes the condensation of pantoate with beta-alanine in an ATP-dependent reaction via a pantoyl-adenylate intermediate. The sequence is that of Pantothenate synthetase from Photorhabdus laumondii subsp. laumondii (strain DSM 15139 / CIP 105565 / TT01) (Photorhabdus luminescens subsp. laumondii).